Reading from the N-terminus, the 94-residue chain is Cell division protein FtsB (94 aa).

The Cytoplasmic segment spans residues 1–8 (MRLRSPYW). Residues 9–26 (LFVVLILALAGLQYRLWV) traverse the membrane as a helical segment. Residues 27–94 (GDGSLAQVRD…DGETLYQLAK (68 aa)) are Periplasmic-facing. Residues 31–78 (LAQVRDLQKQIADQHGENERLLERNRILEAEVAELKKGTETVEERARH) adopt a coiled-coil conformation.

The protein belongs to the FtsB family. In terms of assembly, part of a complex composed of FtsB, FtsL and FtsQ.

It localises to the cell inner membrane. Functionally, essential cell division protein. May link together the upstream cell division proteins, which are predominantly cytoplasmic, with the downstream cell division proteins, which are predominantly periplasmic. The polypeptide is Cell division protein FtsB (Pseudomonas aeruginosa (strain ATCC 15692 / DSM 22644 / CIP 104116 / JCM 14847 / LMG 12228 / 1C / PRS 101 / PAO1)).